The primary structure comprises 193 residues: Acyl carrier protein phosphodiesterase (193 aa).

The protein belongs to the AcpH family.

It carries out the reaction holo-[ACP] + H2O = apo-[ACP] + (R)-4'-phosphopantetheine + H(+). Its function is as follows. Converts holo-ACP to apo-ACP by hydrolytic cleavage of the phosphopantetheine prosthetic group from ACP. In Serratia proteamaculans (strain 568), this protein is Acyl carrier protein phosphodiesterase.